Consider the following 238-residue polypeptide: uncharacterized protein (238 aa).

Disordered stretches follow at residues 1-51 (MPCT…ASCA) and 214-238 (ITVE…FPTA). Positions 16–31 (ATWRTARPAPRRCGSC) are enriched in low complexity.

This is an uncharacterized protein from Streptomyces griseus.